The chain runs to 444 residues: Trigger factor (444 aa).

One can recognise a PPIase FKBP-type domain in the interval 160 to 245 (DMQVTFDFEG…VKQVEKPKLP (86 aa)).

It belongs to the FKBP-type PPIase family. Tig subfamily.

It is found in the cytoplasm. It catalyses the reaction [protein]-peptidylproline (omega=180) = [protein]-peptidylproline (omega=0). Involved in protein export. Acts as a chaperone by maintaining the newly synthesized protein in an open conformation. Functions as a peptidyl-prolyl cis-trans isomerase. In Acinetobacter baumannii (strain SDF), this protein is Trigger factor.